Here is a 211-residue protein sequence, read N- to C-terminus: Small ribosomal subunit protein uS5 (211 aa).

The S5 DRBM domain maps to 50-113 (LEDEVLDINM…DNAKINITRI (64 aa)).

It belongs to the universal ribosomal protein uS5 family. As to quaternary structure, part of the 30S ribosomal subunit. Contacts protein S4.

Functionally, with S4 and S12 plays an important role in translational accuracy. In Methanococcoides burtonii (strain DSM 6242 / NBRC 107633 / OCM 468 / ACE-M), this protein is Small ribosomal subunit protein uS5.